The chain runs to 361 residues: Basic helix-loop-helix protein 79 (361 aa).

The disordered stretch occupies residues 66–159; sequence APEASNGSGS…ASTVTAGQKT (94 aa). Basic and acidic residues predominate over residues 124-138; it reads GRPERARPGAKKKAE. Over residues 146-157 the composition is skewed to polar residues; the sequence is PATSASTVTAGQ. The short motif at 166–173 is the Nuclear localization signal element; it reads ARRGQATD. Residues 170–183 are basic motif; degenerate; that stretch reads QATDSHSLAERVRR. Residues 170 to 220 form the bHLH domain; the sequence is QATDSHSLAERVRRERISERMRYLQELVPGCNKVTGKAGMLDEIINYVQSL. The helix-loop-helix motif stretch occupies residues 184 to 220; the sequence is ERISERMRYLQELVPGCNKVTGKAGMLDEIINYVQSL.

The protein belongs to the bHLH protein family. Homodimer. Interacts with IBH1.

Its subcellular location is the nucleus. Together with BCL1, positive regulator of cell elongation at least partially through increased gibberellic acid (GA) biosynthesis. The protein is Basic helix-loop-helix protein 79 of Oryza sativa subsp. indica (Rice).